We begin with the raw amino-acid sequence, 249 residues long: Putative NAD(+)--arginine ADP-ribosyltransferase Vis (249 aa).

The signal sequence occupies residues 1-18 (MNTRFLLLLCCLSFTTFS). In terms of domain architecture, TR mART core spans 31 to 223 (EEEVTQLAED…IGVETVKASA (193 aa)). Residues 68–80 (SISGYQTANDYLR), 117–120 (RGTW), and glutamate 137 contribute to the NAD(+) site. The active site involves arginine 117. Active-site residues include serine 142 and glutamate 191. Glutamate 191 is a binding site for NAD(+).

This sequence belongs to the Arg-specific ADP-ribosyltransferase family.

The protein localises to the secreted. The catalysed reaction is L-arginyl-[protein] + NAD(+) = N(omega)-(ADP-D-ribosyl)-L-arginyl-[protein] + nicotinamide + H(+). Functionally, a probable mono(ADP-ribosyl)transferase, it may ADP-ribosylate Arg in target protein(s). Upon expression in yeast cells causes cell death. The chain is Putative NAD(+)--arginine ADP-ribosyltransferase Vis from Vibrio splendidus (strain 12B01).